A 780-amino-acid chain; its full sequence is LPS-assembly protein LptD (780 aa).

The N-terminal stretch at 1 to 24 is a signal peptide; that stretch reads MKKRLPTLLASLIGSALYSQQALA.

This sequence belongs to the LptD family. Component of the lipopolysaccharide transport and assembly complex. Interacts with LptE and LptA.

It is found in the cell outer membrane. Its function is as follows. Together with LptE, is involved in the assembly of lipopolysaccharide (LPS) at the surface of the outer membrane. The sequence is that of LPS-assembly protein LptD from Sodalis glossinidius (strain morsitans).